The chain runs to 218 residues: Small ribosomal subunit protein uS3c (218 aa).

Positions 47–118 (VQKNMKTSSG…KLNIAITRIE (72 aa)) constitute a KH type-2 domain.

Belongs to the universal ribosomal protein uS3 family. Part of the 30S ribosomal subunit.

The protein resides in the plastid. It localises to the chloroplast. In Helianthus annuus (Common sunflower), this protein is Small ribosomal subunit protein uS3c (rps3).